Here is a 760-residue protein sequence, read N- to C-terminus: Phosphoribosylformylglycinamidine synthase subunit PurL (760 aa).

Residues 1-25 (MNMSLPADRDTAKKPSAQKPSAHAQ) form a disordered region. The active site involves histidine 69. The ATP site is built by tyrosine 72 and lysine 115. Glutamate 117 contributes to the Mg(2+) binding site. Substrate contacts are provided by residues 118–121 (SHNH) and arginine 140. Histidine 119 acts as the Proton acceptor in catalysis. Residue aspartate 141 coordinates Mg(2+). A substrate-binding site is contributed by glutamine 265. Aspartate 293 contributes to the Mg(2+) binding site. 337–339 (ESQ) lines the substrate pocket. The ATP site is built by asparagine 519 and glycine 556. Asparagine 557 contacts Mg(2+). Serine 559 is a substrate binding site.

Belongs to the FGAMS family. As to quaternary structure, monomer. Part of the FGAM synthase complex composed of 1 PurL, 1 PurQ and 2 PurS subunits.

It localises to the cytoplasm. It carries out the reaction N(2)-formyl-N(1)-(5-phospho-beta-D-ribosyl)glycinamide + L-glutamine + ATP + H2O = 2-formamido-N(1)-(5-O-phospho-beta-D-ribosyl)acetamidine + L-glutamate + ADP + phosphate + H(+). It functions in the pathway purine metabolism; IMP biosynthesis via de novo pathway; 5-amino-1-(5-phospho-D-ribosyl)imidazole from N(2)-formyl-N(1)-(5-phospho-D-ribosyl)glycinamide: step 1/2. Functionally, part of the phosphoribosylformylglycinamidine synthase complex involved in the purines biosynthetic pathway. Catalyzes the ATP-dependent conversion of formylglycinamide ribonucleotide (FGAR) and glutamine to yield formylglycinamidine ribonucleotide (FGAM) and glutamate. The FGAM synthase complex is composed of three subunits. PurQ produces an ammonia molecule by converting glutamine to glutamate. PurL transfers the ammonia molecule to FGAR to form FGAM in an ATP-dependent manner. PurS interacts with PurQ and PurL and is thought to assist in the transfer of the ammonia molecule from PurQ to PurL. The sequence is that of Phosphoribosylformylglycinamidine synthase subunit PurL from Tropheryma whipplei (strain TW08/27) (Whipple's bacillus).